The sequence spans 62 residues: DNA-binding protein 7 (62 aa).

Belongs to the 7 kDa DNA-binding/endoribonuclease P2 family. As to quaternary structure, monomer.

It localises to the cytoplasm. Its function is as follows. Can constrain negative DNA supercoils. May be involved in maintaining the integrity of the genome at high temperature. This chain is DNA-binding protein 7, found in Metallosphaera cuprina (strain Ar-4).